The primary structure comprises 225 residues: Methylthioribulose-1-phosphate dehydratase (225 aa).

Positions 106 and 108 each coordinate Zn(2+).

Belongs to the aldolase class II family. MtnB subfamily. Zn(2+) serves as cofactor.

The catalysed reaction is 5-(methylsulfanyl)-D-ribulose 1-phosphate = 5-methylsulfanyl-2,3-dioxopentyl phosphate + H2O. It participates in amino-acid biosynthesis; L-methionine biosynthesis via salvage pathway; L-methionine from S-methyl-5-thio-alpha-D-ribose 1-phosphate: step 2/6. Functionally, catalyzes the dehydration of methylthioribulose-1-phosphate (MTRu-1-P) into 2,3-diketo-5-methylthiopentyl-1-phosphate (DK-MTP-1-P). The polypeptide is Methylthioribulose-1-phosphate dehydratase (Xanthomonas oryzae pv. oryzae (strain PXO99A)).